We begin with the raw amino-acid sequence, 77 residues long: Pi/alpha-stichotoxin-Hmg5b (77 aa).

Residues methionine 1–alanine 21 form the signal peptide. Residues leucine 22–glutamine 34 constitute a propeptide that is removed on maturation. 3 disulfides stabilise this stretch: cysteine 40–cysteine 73, cysteine 42–cysteine 66, and cysteine 56–cysteine 74. Position 52 is a methionine sulfoxide; partial (methionine 52).

This sequence belongs to the sea anemone type 3 (BDS) potassium channel toxin family. In terms of processing, toxin occurs in two forms in the mucus, Hmg 1b-2 which is not oxidized and Hmg 1b-2 MetOx which is oxidized at Met-52.

Its subcellular location is the secreted. It localises to the nematocyst. The non-oxidized toxin is remarkably non-selective with activity on many different ion channels. Weakly and reversibly inhibits rat and human homomeric ASIC1 (isoform ASIC1a) (IC(50)=4.8 uM, and IC(50)=14.6 uM), and ASIC3 (IC(50)=15.9 uM). Molecular modeling interaction with ASIC1a suggests that this peptide hinders the collapse of acidic pockets and stabilizes nonconducting channels state. It activates several potassium channels including Kv1.1/KCNA1, Kv1.2/KCNA2, and drosophila Shaker IR. It moderately to potently inhibits potassium channels including Kv1.3/KCNA3, Kv1.4/KCNA4, Kv1.5/KCNA5, Kv1.6/KCNA6, Kv2.1/KCNB1, Kv4.2/KCND2, Kv7.1/KCNQ1, Kv7.2/Kv7.3 (KCNQ2/KCNQ3), Kv7.4/KCNQ4, hERG/KCNH2, and C.elegans QKT1. On sodium channels, it moderately to potently inhibits Nav1.1/SCN1A, Nav1.2/SCN2A, Nav1.3/SCN3A, Nav1.4/SCN4A, Nav1.5/SCN5A, Nav1.6/SCN8A, Nav1.7/SCN9A, Nav1.8/SCN10A, and B.germanica BgNav. It also moderately to potently inhibits Cav3.1/CACNA1G, Cav3.2/CACNA1H, and Cav3.3/CACNA1I. Significant shifts in the voltage-current relationship are observed on Kv and Nav, depending on the channel isoform, whereas the toxin does not seem to modulate the voltage-sensor domains of Cav channels, acting mainly as a pore blocker. Does not activate nicotinic acetylcholine receptors (nAChR), but potentiates ACh-elicited current of human alpha-7/CHRNA7 nAChR. Is also able to bind T.californica muscle-type nAChRs. In vivo, causes an excitatory effect in mice behavior. Also shows antihyperalgesic and analgesic activity in the acid-induced muscle pain mice model, and weak anti-inflammatory effect in models of acute local inflammation. Functionally, forms an oxidized toxin derivative (Hmg 1b-2 MetOx). Able to bind T.californica muscle-type nAChRs (alpha-1-beta-1-delta-epsilon (CHRNA1-CHRNB1-CHRND-CHRNE)). The chain is Pi/alpha-stichotoxin-Hmg5b from Heteractis magnifica (Magnificent sea anemone).